Here is a 591-residue protein sequence, read N- to C-terminus: Asparagine synthetase [glutamine-hydrolyzing] 2 (591 aa).

The active-site For GATase activity is cysteine 2. The Glutamine amidotransferase type-2 domain maps to cysteine 2–glycine 185. Residues arginine 50 to valine 54, asparagine 75 to glutamate 77, and aspartate 98 contribute to the L-glutamine site. The Asparagine synthetase domain occupies proline 193–proline 516. Residues leucine 231, isoleucine 267, and serine 341 to glycine 342 each bind ATP.

Expressed in companion cells of leaf sheath vascular bundles, and phloem-parenchyma cells, nucellar projections and nucellar epidermis of dorsal vascular bundles of grains.

The catalysed reaction is L-aspartate + L-glutamine + ATP + H2O = L-asparagine + L-glutamate + AMP + diphosphate + H(+). The protein operates within amino-acid biosynthesis; L-asparagine biosynthesis; L-asparagine from L-aspartate (L-Gln route): step 1/1. Functionally, essential for nitrogen assimilation, distribution and remobilization within the plant via the phloem. In Oryza sativa subsp. japonica (Rice), this protein is Asparagine synthetase [glutamine-hydrolyzing] 2.